A 443-amino-acid chain; its full sequence is MNSTPPTSPVTRVSDGSFPSISNNSKGFAYRQPQKHKSNFAYSHLVSPVEEPTAKFSEAFQTDYSSKAPVATSEAHLKNDLDVLFTTPRFYSPENLALMFRLSNTVSSLEFLDEFLMGILLAPEMDFLSNPSYSLPSNKLVGQGSYSYVYPISSSASSRCNNDSGVVLKFAKSQHKSKVILQEALTLAYLQYMSPSTNESHIIPFYGLTYITKSHFRRLRSNECVPGLILPKCEMSLYHFNTAVSHKLSLITKRKIWWRLMKQMIDALKSLKTNGIIHGDIKTANILITEMHVLNGGHCKDFDFYLADFTSAFHINQTPTDLNTTVEYCAPELIDSSSDHVPTFESDLYAVGLCLLSFISQHEPYNELQALVSHGSSPGIGSSSIQQSQWLINALLKKDPINLNMLRNDLFQDWKSELALLSRILVDRLPLENLITILDSNYI.

The Protein kinase domain maps to 135–415; that stretch reads LPSNKLVGQG…LRNDLFQDWK (281 aa). Residues 141-149 and K169 contribute to the ATP site; that span reads VGQGSYSYV. D280 (proton acceptor) is an active-site residue.

It belongs to the protein kinase superfamily. Ser/Thr protein kinase family.

It catalyses the reaction L-seryl-[protein] + ATP = O-phospho-L-seryl-[protein] + ADP + H(+). The catalysed reaction is L-threonyl-[protein] + ATP = O-phospho-L-threonyl-[protein] + ADP + H(+). In terms of biological role, probable serine/threonine protein kinase which may function redundantly with MPK1-independent branch of the PCK1 pathway that is presumed to be required for the tolerance to high temperatures and staurosporine. In Saccharomyces cerevisiae (strain ATCC 204508 / S288c) (Baker's yeast), this protein is Serine/threonine-protein kinase ISR1 (ISR1).